Reading from the N-terminus, the 504-residue chain is UDP-N-acetylmuramoylalanine--D-glutamate ligase (504 aa).

Residue 129 to 135 coordinates ATP; the sequence is GTNGKTT.

It belongs to the MurCDEF family.

It is found in the cytoplasm. The catalysed reaction is UDP-N-acetyl-alpha-D-muramoyl-L-alanine + D-glutamate + ATP = UDP-N-acetyl-alpha-D-muramoyl-L-alanyl-D-glutamate + ADP + phosphate + H(+). It participates in cell wall biogenesis; peptidoglycan biosynthesis. Functionally, cell wall formation. Catalyzes the addition of glutamate to the nucleotide precursor UDP-N-acetylmuramoyl-L-alanine (UMA). This Burkholderia pseudomallei (strain 668) protein is UDP-N-acetylmuramoylalanine--D-glutamate ligase.